A 134-amino-acid polypeptide reads, in one-letter code: Protein E6 (134 aa).

Zinc fingers lie at residues 15-51 and 88-124; these read CLQCKKALGSLDALKCKNHKYRRVHRGGKPYGMCQIC and CYYCGCVLSDSEKDRHALDHEGYLYVRGRARGRCYSC.

It belongs to the papillomaviridae E6 protein family. Forms homodimers. Interacts with ubiquitin-protein ligase UBE3A/E6-AP; this interaction stimulates UBE3A ubiquitin activity. Interacts with host BAK1.

It localises to the host cytoplasm. It is found in the host nucleus. Plays a major role in the induction and maintenance of cellular transformation. E6 associates with host UBE3A/E6-AP ubiquitin-protein ligase and modulates its activity. Protects host keratinocytes from apoptosis by mediating the degradation of host BAK1. May also inhibit host immune response. This Bos taurus (Bovine) protein is Protein E6.